We begin with the raw amino-acid sequence, 325 residues long: Alkanal monooxygenase beta chain (325 aa).

This sequence belongs to the bacterial luciferase oxidoreductase family. Heterodimer of an alpha and a beta chain.

The catalysed reaction is a long-chain fatty aldehyde + FMNH2 + O2 = a long-chain fatty acid + hnu + FMN + H2O + 2 H(+). In terms of biological role, light-emitting reaction in luminous bacteria. The specific role of the beta subunit is unknown, but it is absolutely required for bioluminescence activity. This is Alkanal monooxygenase beta chain (luxB) from Photobacterium leiognathi.